A 200-amino-acid polypeptide reads, in one-letter code: Cysteine-rich venom protein VAR8 (200 aa).

An N-terminal signal peptide occupies residues 1 to 22 (MILLKLYLTLAAILCQSRGTTS). Positions 41–169 (NKHNDLRRTV…PLKYFLVCQY (129 aa)) constitute an SCP domain. Intrachain disulfides connect Cys-77–Cys-156, Cys-95–Cys-170, Cys-151–Cys-167, and Cys-189–Cys-196.

This sequence belongs to the CRISP family. Post-translationally, contains 8 disulfide bonds. In terms of tissue distribution, expressed by the venom gland.

The protein localises to the secreted. Functionally, blocks ryanodine receptors, and potassium channels. This is Cysteine-rich venom protein VAR8 from Varanus acanthurus (Ridge-tailed monitor).